A 257-amino-acid polypeptide reads, in one-letter code: NAD-dependent protein deacetylase (257 aa).

A Deacetylase sirtuin-type domain is found at 3-252; sequence NGECLEGGRK…DLVLNEVKGI (250 aa). NAD(+) contacts are provided by A29, T33, F40, R41, Q105, I107, D108, and H123. F40 contacts nicotinamide. Residues I107 and D108 each coordinate nicotinamide. H123 serves as the catalytic Proton acceptor. Residues C131, C134, C156, and C159 each contribute to the Zn(2+) site. NAD(+) contacts are provided by S195, S196, and N220.

The protein belongs to the sirtuin family. Class U subfamily. Zn(2+) is required as a cofactor.

It is found in the cytoplasm. It catalyses the reaction N(6)-acetyl-L-lysyl-[protein] + NAD(+) + H2O = 2''-O-acetyl-ADP-D-ribose + nicotinamide + L-lysyl-[protein]. Functionally, NAD-dependent protein deacetylase which modulates the activities of several enzymes which are inactive in their acetylated form. Deacetylates the N-terminal lysine residue of Alba, the major archaeal chromatin protein and that, in turn, increases Alba's DNA binding affinity, thereby repressing transcription. In Caldivirga maquilingensis (strain ATCC 700844 / DSM 13496 / JCM 10307 / IC-167), this protein is NAD-dependent protein deacetylase.